A 1110-amino-acid chain; its full sequence is Isoleucine--tRNA ligase (1110 aa).

A 'HIGH' region motif is present at residues 47–57 (PSANGTPGIHH). The short motif at 658-662 (KMSKR) is the 'KMSKS' region element. Position 661 (Lys-661) interacts with ATP.

Belongs to the class-I aminoacyl-tRNA synthetase family. IleS type 2 subfamily. As to quaternary structure, monomer. The cofactor is Zn(2+).

The protein localises to the cytoplasm. The enzyme catalyses tRNA(Ile) + L-isoleucine + ATP = L-isoleucyl-tRNA(Ile) + AMP + diphosphate. Functionally, catalyzes the attachment of isoleucine to tRNA(Ile). As IleRS can inadvertently accommodate and process structurally similar amino acids such as valine, to avoid such errors it has two additional distinct tRNA(Ile)-dependent editing activities. One activity is designated as 'pretransfer' editing and involves the hydrolysis of activated Val-AMP. The other activity is designated 'posttransfer' editing and involves deacylation of mischarged Val-tRNA(Ile). This Cytophaga hutchinsonii (strain ATCC 33406 / DSM 1761 / CIP 103989 / NBRC 15051 / NCIMB 9469 / D465) protein is Isoleucine--tRNA ligase.